A 346-amino-acid polypeptide reads, in one-letter code: KH domain-containing, RNA-binding, signal transduction-associated protein 3 (346 aa).

An involved in homodimerization region spans residues 1-160 (MEEKYLPELM…IKKFLIPDYN (160 aa)). Residue Lys4 forms a Glycyl lysine isopeptide (Lys-Gly) (interchain with G-Cter in SUMO2) linkage. The KH domain maps to 61-127 (LIPVKQFPKF…AKYFHLNDDL (67 aa)). Disordered stretches follow at residues 212-266 (RPVA…QETY) and 317-346 (GQEE…YGRY). The span at 253-262 (GYRPPPPPPT) shows a compositional bias: pro residues.

Belongs to the KHDRBS family. In terms of assembly, self-associates to form homooligomers; dimerization increases RNA affinity. Interacts with KHDRBS2/SLM-1. Interacts with KHDRBS1/SAM68; heterooligomer formation of KHDRBS family proteins may modulate RNA substrate specificity. Interacts with the splicing regulatory proteins SFRS9, SAFB and YTHDC1. Interacts with HNRPL, RBMX, p85 subunit of PI3-kinase, SERPINB5. In terms of processing, phosphorylated on tyrosine residues by PTK6. As to expression, highly expressed in testis and brain. In adult cerebellum expressed predominantly in internal granular layer interneurons and in hippocampus is exclusively expressed in CA neurons; expression is restricted to neuronal subpopulations largely non-overlapping with expression of KHDRBS2/SLM-1.

The protein resides in the nucleus. RNA-binding protein that plays a role in the regulation of alternative splicing and influences mRNA splice site selection and exon inclusion. Binds preferentially to the 5'-[AU]UAAA-3' motif in vitro. Binds optimally to RNA containing 5'-[AU]UAA-3' as a bipartite motif spaced by more than 15 nucleotides. Binds poly(A). RNA-binding abilities are down-regulated by tyrosine kinase PTK6. Involved in splice site selection of vascular endothelial growth factor. In vitro regulates CD44 alternative splicing by direct binding to purine-rich exonic enhancer. Can regulate alternative splicing of neurexins NRXN1-3 in the laminin G-like domain 6 containing the evolutionary conserved neurexin alternative spliced segment 4 (AS4) involved in neurexin selective targeting to postsynaptic partners such as neuroligins and LRRTM family members. High concentrations in forebrain structures block splicing inclusion of NRXN1-3 AS4 exons while low concentrations favor their inclusion. Targeted, cell-type specific splicing regulation of NRXN1 at AS4 is involved in neuronal glutamatergic synapse function and plasticity and is linked to behavioral aspects. Regulates expression of KHDRBS2/SLIM-1 in defined neuron populations in the hippocampus by modifying its alternative splicing resulting in a transcript predicted to undergo nonsense-mediated decay. Can bind FABP9 mRNA. May play a role as a negative regulator of cell growth. Inhibits cell proliferation. This Mus musculus (Mouse) protein is KH domain-containing, RNA-binding, signal transduction-associated protein 3 (Khdrbs3).